The following is an 87-amino-acid chain: MKEGIHPNYREVVFQDMSNGFKFITRSTIQTRENIELDGKTYPLAKIEVSSESHSFYTGQQKIMDTAGRVEKFKNKFGARASGKLAK.

It belongs to the bacterial ribosomal protein bL31 family. Type B subfamily. Part of the 50S ribosomal subunit.

In Burkholderia ambifaria (strain MC40-6), this protein is Large ribosomal subunit protein bL31B.